We begin with the raw amino-acid sequence, 264 residues long: COP9 signalosome complex subunit 7b (264 aa).

N-acetylalanine is present on Ala-2. Residues 2–159 (AGEQKPSSNL…QLLEVDFCIG (158 aa)) enclose the PCI domain. Residues 194 to 237 (RANQYKENHHRTQQQVEAEVSNIKKTLKATASSSAQEMEQQLAE) adopt a coiled-coil conformation. The segment covering 223 to 232 (TASSSAQEME) has biased composition (polar residues). A disordered region spans residues 223–264 (TASSSAQEMEQQLAERECPPHTEQRQPTKKMSKVKGLVSSRH). The segment covering 235-248 (LAERECPPHTEQRQ) has biased composition (basic and acidic residues).

Belongs to the CSN7/EIF3M family. CSN7 subfamily. As to quaternary structure, component of the CSN complex, composed of COPS1/GPS1, COPS2, COPS3, COPS4, COPS5, COPS6, COPS7 (COPS7A or COPS7B) and COPS8 and COPS9. In the complex, it probably interacts directly with COPS1, COPS2, COPS4, COPS5, COPS6 and COPS8. Interacts with EIF3S6.

Its subcellular location is the cytoplasm. The protein resides in the nucleus. Its function is as follows. Component of the COP9 signalosome complex (CSN), a complex involved in various cellular and developmental processes. The CSN complex is an essential regulator of the ubiquitin (Ubl) conjugation pathway by mediating the deneddylation of the cullin subunits of SCF-type E3 ligase complexes, leading to decrease the Ubl ligase activity of SCF-type complexes such as SCF, CSA or DDB2. The complex is also involved in phosphorylation of p53/TP53, JUN, I-kappa-B-alpha/NFKBIA, ITPK1 and IRF8/ICSBP, possibly via its association with CK2 and PKD kinases. CSN-dependent phosphorylation of TP53 and JUN promotes and protects degradation by the Ubl system, respectively. The chain is COP9 signalosome complex subunit 7b (Cops7b) from Mus musculus (Mouse).